Reading from the N-terminus, the 549-residue chain is Biotin-dependent acetyl-/propionyl-coenzyme A carboxylase beta5 subunit (549 aa).

Residues 25 to 281 (TAGKLAELHK…NNFTDAPRYS (257 aa)) enclose the CoA carboxyltransferase N-terminal domain. The CoA carboxyltransferase C-terminal domain maps to 295–542 (AKDLELDTLI…ERKIAHLPPK (248 aa)).

This sequence belongs to the AccD/PCCB family. As to quaternary structure, the biotin-dependent acyl-CoA carboxylase complex is composed of AccA3, which contains the biotin carboxylase (BC) and biotin carboxyl carrier protein (BCCP) domains, and AccD5, which contains the carboxyl transferase (CT) domain.

It carries out the reaction N(6)-carboxybiotinyl-L-lysyl-[protein] + acetyl-CoA = N(6)-biotinyl-L-lysyl-[protein] + malonyl-CoA. The enzyme catalyses N(6)-carboxybiotinyl-L-lysyl-[protein] + propanoyl-CoA = methylmalonyl-CoA + N(6)-biotinyl-L-lysyl-[protein]. The protein operates within lipid metabolism; mycolic acid biosynthesis. Component of a biotin-dependent acyl-CoA carboxylase complex. This subunit transfers the CO2 from carboxybiotin to the CoA ester substrate. When associated with the alpha3 subunit AccA3, is involved in the carboxylation of acetyl-CoA and propionyl-CoA. This chain is Biotin-dependent acetyl-/propionyl-coenzyme A carboxylase beta5 subunit (accD5), found in Mycobacterium leprae (strain TN).